We begin with the raw amino-acid sequence, 173 residues long: Protein tyrosine phosphatase type IVA 3 (173 aa).

The 154-residue stretch at 8–161 (APVEVSYRHM…YRPKQRLRFK (154 aa)) folds into the Tyrosine-protein phosphatase domain. A disulfide bond links C49 and C104. D72 (proton donor) is an active-site residue. The Phosphocysteine intermediate role is filled by C104. R110 contacts substrate. At C170 the chain carries Cysteine methyl ester. C170 is lipidated: S-farnesyl cysteine. Residues 171-173 (CVM) constitute a propeptide, removed in mature form.

The protein belongs to the protein-tyrosine phosphatase family. As to quaternary structure, interacts with tubulin. In terms of processing, farnesylated. Farnesylation is required for membrane targeting. Unfarnesylated forms are shifted into the nucleus. As to expression, present in the small intestine, where it is located in the differentiated epithelial cells of the villus but not in the proliferating crypt cells (at protein level). Expressed in heart and skeletal muscle, and at lower levels in lung, spleen and testis.

The protein localises to the cell membrane. It localises to the early endosome. The catalysed reaction is O-phospho-L-tyrosyl-[protein] + H2O = L-tyrosyl-[protein] + phosphate. With respect to regulation, inhibited by sodium orthovanadate and peroxovanadium compounds, and by pentamidine. Functionally, protein tyrosine phosphatase which stimulates progression from G1 into S phase during mitosis. Enhances cell proliferation, cell motility and invasive activity, and promotes cancer metastasis. May be involved in the progression of cardiac hypertrophy by inhibiting intracellular calcium mobilization in response to angiotensin II. This Mus musculus (Mouse) protein is Protein tyrosine phosphatase type IVA 3 (Ptp4a3).